The chain runs to 185 residues: Tetratricopeptide repeat protein 36 homolog (185 aa).

3 TPR repeats span residues 53 to 86 (SRELELQGVLLTEKGSFDEALKVFQLALNQAQRA), 88 to 119 (VLNNRAQTLRLAKRDGEALDDLNKALEMASDQ), and 125 to 158 (CHAHCQRGVLYRKLDNLDAARSDFEAAAQLGSKF).

This sequence belongs to the TTC36 family.

The chain is Tetratricopeptide repeat protein 36 homolog from Drosophila pseudoobscura pseudoobscura (Fruit fly).